We begin with the raw amino-acid sequence, 305 residues long: Glutaminase (305 aa).

7 residues coordinate substrate: S61, N113, E158, N165, Y189, Y241, and V259.

The protein belongs to the glutaminase family. As to quaternary structure, homotetramer.

It catalyses the reaction L-glutamine + H2O = L-glutamate + NH4(+). The chain is Glutaminase from Alkaliphilus metalliredigens (strain QYMF).